The following is a 126-amino-acid chain: Small ribosomal subunit protein eS6 (126 aa).

This sequence belongs to the eukaryotic ribosomal protein eS6 family.

This Thermococcus sibiricus (strain DSM 12597 / MM 739) protein is Small ribosomal subunit protein eS6.